Reading from the N-terminus, the 363-residue chain is Phosphoserine aminotransferase (363 aa).

Residue arginine 42 coordinates L-glutamate. Pyridoxal 5'-phosphate is bound by residues tryptophan 105, threonine 155, aspartate 175, and glutamine 198. Lysine 199 carries the post-translational modification N6-(pyridoxal phosphate)lysine. Residue 240–241 (NT) coordinates pyridoxal 5'-phosphate.

Belongs to the class-V pyridoxal-phosphate-dependent aminotransferase family. SerC subfamily. Homodimer. The cofactor is pyridoxal 5'-phosphate.

It localises to the cytoplasm. The enzyme catalyses O-phospho-L-serine + 2-oxoglutarate = 3-phosphooxypyruvate + L-glutamate. The catalysed reaction is 4-(phosphooxy)-L-threonine + 2-oxoglutarate = (R)-3-hydroxy-2-oxo-4-phosphooxybutanoate + L-glutamate. It participates in amino-acid biosynthesis; L-serine biosynthesis; L-serine from 3-phospho-D-glycerate: step 2/3. It functions in the pathway cofactor biosynthesis; pyridoxine 5'-phosphate biosynthesis; pyridoxine 5'-phosphate from D-erythrose 4-phosphate: step 3/5. In terms of biological role, catalyzes the reversible conversion of 3-phosphohydroxypyruvate to phosphoserine and of 3-hydroxy-2-oxo-4-phosphonooxybutanoate to phosphohydroxythreonine. This chain is Phosphoserine aminotransferase, found in Janthinobacterium sp. (strain Marseille) (Minibacterium massiliensis).